Reading from the N-terminus, the 2036-residue chain is MFSKKPHGDVKKSTQKVLDTKKDALTRLKHLRIVIENAESIDLKQFFDQHFSHIYYVFFENFVTIEASLKQKGHKSQREELDAILFIFEKILQLLPERIHQRWQFHSIGLILKKLLHTGNSLKIRREGVRLFLLWLQALQNNCSKEQLWMFSCLIPGFSAPQSEHGPRTLDNLINPPLNLQETQVTIEEITPLVPPQSGDKGQEDLTSYFLEALLKYIVIQVKSLEWKNKENQERGFSFLFSHFKKYYLPYIFPNICKENSLYHPILDIPQMRPKPHYVVIKKDAETNEAIYCTKEPFIKARVIVIRWLVSFWLEPKPHTGPHIPGMEGEVLPKNIQRAAASLVSREESKNDNADKTDRTTEPEQSHSNTSTLTEREPSSSSLCSIDEEHLTDIEIVRRVFSSKRSNVNFVTEIFRQAFLLPICEAAAMRKVVKVYQEWIQQEEKPLFMQEPEEIVITSSDLPCIENVTDHDISMEEGEKREEENGTNTADHVRNSSWAKNGSYQGALHNASEEATEQNIRAGTQAVLQVFIINSSNIFLLEPANEIKNLLDEHTDMCKRILNIYRYMVVQVSMDKKTWEQMLLVLLRVTESVLKMPSQAFLQFQGKKNMTLAGRLAGPLFQTLIVAWIKANLNVYISRELWDDLLSVLSSLTYWEELATEWSLTMETLTKVLARNLYSLDLSDLPLDKLSEQKQKKHKGKGVGHEFQKVSVDKSFSRGWSRDQPGQAPMRQRSATTTGSPGTEKARSIVRQKTVDIDDAQILPRSTRVRHFSQSEETGNEVFGALNEEQPLPRSSSTSDILEPFTVERAKVNKEDMSQKLPPLNSDIGGSSANVPDLMDEFIAERLRSGNASTMTRRGSSPGSLEIPKDLPDILNKQNQMRPIDDPGVPSEWTSPASAGSSDLISSDSHSDSFSAFQYDGRKFDNFGFGTDTGVTSSADVDSGSGHHQSAEEQEVASLTTLHIDSETSSLNQQAFSAEVATITGSESASPVHSPLGSRSQTPSPSTLNIDHMEQKDLQLDEKLHHSVLQTPDDLEISEFPSECCSVMAGGTLTGWHADVATVMWRRMLGILGDVNSIMDPEIHAQVFDYLCELWQNLAKIRDNLGISTDNLTSPSPPVLIPPLRILTPWLFKATMLTDKYKQGKLHAYKLICNTMKRRQDVSPNRDFLTHFYNIMHCGLLHIDQDIVNTIIKHCSPQFFSLGLPGATMLIMDFIVAAGRVASSAFLNAPRVEAQVLLGSLVCFPNLYCELPSLHPNIPDVAVSQFTDVKELIIKTVLSSARDEPSGPARCVALCSLGIWICEELVHESHHPQIKEALNVICVSLKFTNKTVAHVACNMLHMLVHYVPRLQIYQPDSPLKIIQILIATITHLLPSTEASSYEMDKRLVVSLLLCLLDWIMALPLKTLLQPFHATGAESDKTEKSVLNCIYKVLHGCVYGAQCFSNPRYFPMSLSDLASVDYDPFMHLESLKEPEPLHSPDSERSSKLQPVTEVKTQMQHGLISIAARTVITHLVNHLGHYPMSGGPAMLTSQVCENHDNHYSESTELSPELFESPNIQFFVLNNTTLVSCIQIRSEENMPGGGLSAGLASANSNVRIIVRDLSGKYSWDSAILYGPPPVSGLSEPTSFMLSLSHQEKPEEPPTSNECLEDITVKDGLSLQFKRFRETVPTWDTIRDEEDVLDELLQYLGVTSPECLQRTGISLNIPAPQPVCISEKQENDVINAILKQHTEEKEFVEKHFNDLNMKAVEQDEPIPQKPQSAFYYCRLLLSILGMNSWDKRRSFHLLKKNEKLLRELRNLDSRQCRETHKIAVFYVAEGQEDKHSILTNTGGSQAYEDFVAGLGWEVNLTNHCGFMGGLQKNKSTGLTTPYFATSTVEVIFHVSTRMPSDSDDSLTKKLRHLGNDEVHIVWSEHTRDYRRGIIPTEFGDVLIVIYPMKNHMFSIQIMKKPEVPFFGPLFDGAIVNGKVLPIMVRATAINASRALKSLIPLYQNFYEERARYLQTIVQHHLEPTTFEDFAAQVFSPAPYHHLPSDADH.

Disordered stretches follow at residues 343-384 (LVSR…SSLC) and 476-497 (EEGE…RNSS). A compositionally biased stretch (basic and acidic residues) spans 345-365 (SREESKNDNADKTDRTTEPEQ). 2 stretches are compositionally biased toward polar residues: residues 366-384 (SHSN…SSLC) and 486-497 (GTNTADHVRNSS). 2 positions are modified to phosphoserine: S711 and S721. The disordered stretch occupies residues 715 to 753 (SFSRGWSRDQPGQAPMRQRSATTTGSPGTEKARSIVRQK). T754 is subject to Phosphothreonine. S773 carries the post-translational modification Phosphoserine. T778 bears the Phosphothreonine mark. Phosphoserine is present on residues S797, S860, S861, and S864. 2 disordered regions span residues 849 to 910 (SGNA…SDSH) and 982 to 1009 (TITG…STLN). The segment covering 850–863 (GNASTMTRRGSSPG) has biased composition (polar residues). Residues 895–910 (SPASAGSSDLISSDSH) are compositionally biased toward low complexity. A compositionally biased stretch (polar residues) spans 983–1009 (ITGSESASPVHSPLGSRSQTPSPSTLN). 4 positions are modified to phosphoserine: S986, S990, S994, and S1000. Phosphothreonine is present on T1002. Phosphoserine occurs at positions 1004 and 1478. The tract at residues 1327-2035 (FTNKTVAHVA…PYHHLPSDAD (709 aa)) is minimal domain that binds to TCF3/E12. The stretch at 1716 to 1744 (KQENDVINAILKQHTEEKEFVEKHFNDLN) forms a coiled coil. A Rap-GAP domain is found at 1796-2004 (LRNLDSRQCR…EERARYLQTI (209 aa)).

Component of the heterodimeric RalGAP1 complex with RALGAPB. Heterodimerization is required for activity. Interacts with the HLH region of TCF3/isoform E12. In terms of tissue distribution, widely expressed.

The protein localises to the cytoplasm. The protein resides in the nucleus. In terms of biological role, catalytic subunit of the heterodimeric RalGAP1 complex which acts as a GTPase activator for the Ras-like small GTPases RALA and RALB. The polypeptide is Ral GTPase-activating protein subunit alpha-1 (RALGAPA1) (Homo sapiens (Human)).